Here is a 413-residue protein sequence, read N- to C-terminus: Histidine--tRNA ligase (413 aa).

This sequence belongs to the class-II aminoacyl-tRNA synthetase family. In terms of assembly, homodimer.

The protein resides in the cytoplasm. The enzyme catalyses tRNA(His) + L-histidine + ATP = L-histidyl-tRNA(His) + AMP + diphosphate + H(+). The protein is Histidine--tRNA ligase of Ehrlichia canis (strain Jake).